Consider the following 814-residue polypeptide: Dimethyl sulfoxide reductase DmsA (814 aa).

The tat-type signal signal peptide spans 1–45; the sequence is MKTKIPDAVLAAEVSRRGLVKTTAIGGLAMASSALTLPFSRIAHA. The 4Fe-4S Mo/W bis-MGD-type domain maps to 56 to 118; it reads EKVIWSACTV…SMRRRVYNPD (63 aa). 4 residues coordinate [4Fe-4S] cluster: cysteine 63, cysteine 67, cysteine 71, and cysteine 104. Residues 172–176, serine 205, 244–245, 270–271, 291–293, 386–387, arginine 390, asparagine 488, 512–513, histidine 701, 707–709, asparagine 788, and 804–805 contribute to the Mo-bis(molybdopterin guanine dinucleotide) site; these read LGGTM, ET, ID, GTD, WG, HST, and SH.

This sequence belongs to the prokaryotic molybdopterin-containing oxidoreductase family. Heterotrimeric enzyme composed of a catalytic heterodimer (DmsAB) and a membrane anchor protein (DmsC). It depends on [4Fe-4S] cluster as a cofactor. Mo-bis(molybdopterin guanine dinucleotide) is required as a cofactor. In terms of processing, exported by the Tat system. The position of the signal peptide cleavage has been experimentally proven. Can also be exported by the Sec system.

It localises to the cell membrane. The enzyme catalyses dimethyl sulfide + a menaquinone + H2O = dimethyl sulfoxide + a menaquinol. Its activity is regulated as follows. Inhibited by dithionite, sodium hydrogensulfite and tungstate. Functionally, catalyzes the reduction of dimethyl sulfoxide (DMSO) to dimethyl sulfide (DMS). DMSO reductase serves as the terminal reductase under anaerobic conditions, with DMSO being the terminal electron acceptor. Terminal reductase during anaerobic growth on various sulfoxides and N-oxide compounds. Allows E.coli to grow anaerobically on DMSO as respiratory oxidant. The sequence is that of Dimethyl sulfoxide reductase DmsA (dmsA) from Escherichia coli (strain K12).